Here is a 91-residue protein sequence, read N- to C-terminus: Small ribosomal subunit protein bS16 (91 aa).

This sequence belongs to the bacterial ribosomal protein bS16 family.

The sequence is that of Small ribosomal subunit protein bS16 from Streptococcus mutans serotype c (strain ATCC 700610 / UA159).